We begin with the raw amino-acid sequence, 215 residues long: uncharacterized protein (215 aa).

Residues 98–119 (AAALAVAVASLCVCTLLLTHIV) form a helical membrane-spanning segment.

The protein resides in the membrane. This is an uncharacterized protein from Treponema pallidum (strain Nichols).